A 944-amino-acid polypeptide reads, in one-letter code: DNA ligase 4 (944 aa).

Residues Glu-280, Lys-282, Arg-287, Glu-340, Phe-382, Glu-442, Lys-447, Lys-464, and Lys-466 each coordinate ATP. The active-site N6-AMP-lysine intermediate is Lys-282. Residue Glu-340 coordinates Mg(2+). Position 442 (Glu-442) interacts with Mg(2+). BRCT domains are found at residues 681 to 780 (PISN…PNYC) and 836 to 941 (FPLF…DFPV).

Belongs to the ATP-dependent DNA ligase family. As to quaternary structure, component of the DNA ligase IV complex, composed of DNL4, LIF1 and NEJ1. Interacts (via BRCT domain) with LIF1. Interacts with NEJ1. Interacts with POL4 in the DNL4-LIF1 complex. Requires Mg(2+) as cofactor.

It is found in the nucleus. It carries out the reaction ATP + (deoxyribonucleotide)n-3'-hydroxyl + 5'-phospho-(deoxyribonucleotide)m = (deoxyribonucleotide)n+m + AMP + diphosphate.. In terms of biological role, DNA ligase involved in DNA non-homologous end joining (NHEJ); required for double-strand break (DSB) repair. The polypeptide is DNA ligase 4 (DNL4) (Saccharomyces cerevisiae (strain ATCC 204508 / S288c) (Baker's yeast)).